Consider the following 138-residue polypeptide: Cytochrome b5 (138 aa).

One can recognise a Cytochrome b5 heme-binding domain in the interval 14 to 90 (GRYYRLEEVQ…SETFIIGELH (77 aa)). Heme-binding residues include His49 and His73. Residues 114–136 (SWSNWVIPAIAAIIVALMYRSYM) form a helical membrane-spanning segment.

It belongs to the cytochrome b5 family.

It is found in the endoplasmic reticulum membrane. It localises to the microsome membrane. Functionally, cytochrome b5 is a membrane-bound hemoprotein functioning as an electron carrier for several membrane-bound oxygenases. This chain is Cytochrome b5 (CYB5A), found in Gallus gallus (Chicken).